The following is a 169-amino-acid chain: S-ribosylhomocysteine lyase (169 aa).

3 residues coordinate Fe cation: histidine 54, histidine 58, and cysteine 128.

It belongs to the LuxS family. In terms of assembly, homodimer. Fe cation serves as cofactor.

The enzyme catalyses S-(5-deoxy-D-ribos-5-yl)-L-homocysteine = (S)-4,5-dihydroxypentane-2,3-dione + L-homocysteine. Functionally, involved in the synthesis of autoinducer 2 (AI-2) which is secreted by bacteria and is used to communicate both the cell density and the metabolic potential of the environment. The regulation of gene expression in response to changes in cell density is called quorum sensing. Catalyzes the transformation of S-ribosylhomocysteine (RHC) to homocysteine (HC) and 4,5-dihydroxy-2,3-pentadione (DPD). This Sulfurovum sp. (strain NBC37-1) protein is S-ribosylhomocysteine lyase.